The following is a 177-amino-acid chain: Protein LIGHT-DEPENDENT SHORT HYPOCOTYLS 10 (177 aa).

A compositionally biased stretch (basic and acidic residues) spans 1 to 10 (MSSPRERGKS). Disordered stretches follow at residues 1 to 31 (MSSP…SQKR) and 144 to 177 (RGIP…FSFS). In terms of domain architecture, ALOG spans 25-152 (RYESQKRRDW…ARGIPYKKKK (128 aa)). The Nuclear localization signal signature appears at 150–154 (KKKKK). The span at 168–177 (SSSSSSFSFS) shows a compositional bias: low complexity.

This sequence belongs to the plant homeotic and developmental regulators ALOG protein family.

It localises to the nucleus. Its function is as follows. Probable transcription regulator that acts as a developmental regulator by promoting cell growth in response to light. The protein is Protein LIGHT-DEPENDENT SHORT HYPOCOTYLS 10 (LSH10) of Arabidopsis thaliana (Mouse-ear cress).